The primary structure comprises 272 residues: Shikimate dehydrogenase (NADP(+)) (272 aa).

Residues 14-16 and Thr-61 contribute to the shikimate site; that span reads SKS. The active-site Proton acceptor is the Lys-65. Glu-77 contributes to the NADP(+) binding site. Positions 86 and 102 each coordinate shikimate. NADP(+)-binding positions include 126–130, 149–154, and Met-213; these read GAGGA and NRTVSR. Residue Tyr-215 participates in shikimate binding. Gly-237 contacts NADP(+).

It belongs to the shikimate dehydrogenase family. In terms of assembly, homodimer.

It carries out the reaction shikimate + NADP(+) = 3-dehydroshikimate + NADPH + H(+). It participates in metabolic intermediate biosynthesis; chorismate biosynthesis; chorismate from D-erythrose 4-phosphate and phosphoenolpyruvate: step 4/7. Involved in the biosynthesis of the chorismate, which leads to the biosynthesis of aromatic amino acids. Catalyzes the reversible NADPH linked reduction of 3-dehydroshikimate (DHSA) to yield shikimate (SA). This Escherichia coli O6:H1 (strain CFT073 / ATCC 700928 / UPEC) protein is Shikimate dehydrogenase (NADP(+)).